A 389-amino-acid polypeptide reads, in one-letter code: Phosphatidylglycerol--prolipoprotein diacylglyceryl transferase (389 aa).

The next 4 helical transmembrane spans lie at 28–48 (IIVA…LIYF), 58–78 (FFIF…YFLI), 98–118 (LAIQ…FNVF), and 148–168 (ISVF…QAIG). R169 is a binding site for a 1,2-diacyl-sn-glycero-3-phospho-(1'-sn-glycerol). The next 3 membrane-spanning stretches (helical) occupy residues 220-240 (IPLF…IYFV), 281-301 (IVFS…CQTL), and 309-329 (FWTY…TTLF).

It belongs to the Lgt family.

The protein resides in the cell membrane. It catalyses the reaction L-cysteinyl-[prolipoprotein] + a 1,2-diacyl-sn-glycero-3-phospho-(1'-sn-glycerol) = an S-1,2-diacyl-sn-glyceryl-L-cysteinyl-[prolipoprotein] + sn-glycerol 1-phosphate + H(+). The protein operates within protein modification; lipoprotein biosynthesis (diacylglyceryl transfer). In terms of biological role, catalyzes the transfer of the diacylglyceryl group from phosphatidylglycerol to the sulfhydryl group of the N-terminal cysteine of a prolipoprotein, the first step in the formation of mature lipoproteins. The chain is Phosphatidylglycerol--prolipoprotein diacylglyceryl transferase from Mycoplasma pneumoniae (strain ATCC 29342 / M129 / Subtype 1) (Mycoplasmoides pneumoniae).